Consider the following 551-residue polypeptide: Transcription factor 7-like 1-B (551 aa).

A compositionally biased stretch (gly residues) spans 1 to 11 (MPQLNSGGGDE). Positions 1–61 (MPQLNSGGGD…SENHSSDSDS (61 aa)) are interaction with CTNNB1-A. Disordered regions lie at residues 1-77 (MPQL…EKPR), 183-213 (GTPP…PYYP), 391-474 (WSAR…SLTT), and 492-515 (SPSS…SRPI). 2 stretches are compositionally biased toward basic and acidic residues: residues 17–32 (ELIR…EKSP) and 52–77 (SENH…EKPR). The interval 109-312 (LGGHYLPNGA…SPNLSTKSNV (204 aa)) is interaction with AES and TLE4-A. Residues 324 to 392 (IKKPLNAFML…LHSQLYPSWS (69 aa)) constitute a DNA-binding region (HMG box). The span at 407–416 (KQSPEMENYT) shows a compositional bias: basic and acidic residues. Residues 408-551 (QSPEMENYTK…PLSLVTRSSD (144 aa)) form an interaction with CTBP-B region. The segment covering 445 to 464 (SPATPSAALASPAAPAATHS) has biased composition (low complexity). Residues 465 to 474 (EQAQPLSLTT) are compositionally biased toward polar residues.

This sequence belongs to the TCF/LEF family. In terms of assembly, interacts with csnk1e, ctnnb1-A, ctbp-B, dact1-A and gsk3b. May interact with ase and tle4-A. Interacts with tle1-B. Phosphorylated. Phosphorylation by csnk1e promotes binding to ctnnb1-A while phosphorylation by gsk3b may reverse this effect.

The protein resides in the nucleus. Its function is as follows. Participates in the Wnt signaling pathway. Binds to DNA and acts as a repressor in the absence of ctnnb1-A and possibly ctnnb1-B, and as an activator in the presence of these proteins. Required early in development for the establishment of the dorsal body axis in response to maternal Wnt signaling. This is Transcription factor 7-like 1-B (tcf7l1-b) from Xenopus laevis (African clawed frog).